A 576-amino-acid chain; its full sequence is Low-affinity glucose transporter HXT4 (576 aa).

Positions 1 to 56 (MSEEAAYQEDTAVQNTPADALSPVESDSNSALSTPSNKAERDDMKDFDENHEESNN) are disordered. Over 1–66 (MSEEAAYQED…YVEIPKKPAS (66 aa)) the chain is Cytoplasmic. Residues 25-37 (ESDSNSALSTPSN) are compositionally biased toward polar residues. The segment covering 38 to 54 (KAERDDMKDFDENHEES) has biased composition (basic and acidic residues). Residue Lys45 forms a Glycyl lysine isopeptide (Lys-Gly) (interchain with G-Cter in ubiquitin) linkage. The helical transmembrane segment at 67–87 (AYVTVSICCLMVAFGGFVFGW) threads the bilayer. Topologically, residues 88 to 122 (DTGTISGFVAQTDFIRRFGMKHHDGTYYLSKVRTG) are extracellular. The helical transmembrane segment at 123 to 143 (LMVSIINIGCAIGGIILAKLG) threads the bilayer. Over 144–149 (DMYGRK) the chain is Cytoplasmic. A helical transmembrane segment spans residues 150–170 (MGLIVVVVIYIIGIIIQIASI). Residues 171-180 (NKWYQYFIGR) lie on the Extracellular side of the membrane. The helical transmembrane segment at 181–201 (IISGLGVGGIAVLSPMLISEV) threads the bilayer. The Cytoplasmic segment spans residues 202–207 (SPKHIR). A helical membrane pass occupies residues 208 to 228 (GTLVSCYQLMITLGIFLGYCT). The Extracellular segment spans residues 229 to 242 (NYGTKTYTNSVQWR). A helical transmembrane segment spans residues 243-263 (VPLGLGFAWALFMIGGMTFVP). The Cytoplasmic segment spans residues 264 to 346 (ESPRYLVEVG…IQSLQQLTGD (83 aa)). A helical transmembrane segment spans residues 347 to 363 (NYFFYYGTTVFTAVGLS). At 364-369 (DSFETS) the chain is on the extracellular side. The helical transmembrane segment at 370 to 387 (IVLGIVNFASTFVGIFLV) threads the bilayer. At 388 to 394 (ERYGRRR) the chain is on the cytoplasmic side. The helical transmembrane segment at 395–415 (CLLWGAASMTACMVVFASVGV) threads the bilayer. The Extracellular portion of the chain corresponds to 416-437 (TRLWPNGKKNGSSKGAGNCMIV). Asn425 carries an N-linked (GlcNAc...) asparagine glycan. The helical transmembrane segment at 438–458 (FTCFYLFCFATTWAPIPFVVN) threads the bilayer. Topologically, residues 459 to 475 (SETFPLRVKSKCMAIAQ) are cytoplasmic. Residues 476–496 (ACNWIWGFLIGFFTPFISNAI) traverse the membrane as a helical segment. Residue Asp497 is a topological domain, extracellular. Residues 498–518 (FYYGYVFMGCLVFSYFYVFFF) traverse the membrane as a helical segment. Residues 519 to 576 (VPETKGLTLEEVNTLWEEGVLPWKSPSWVPPNKRGTDYNADDLMHDDQPFYKKMFGKK) are Cytoplasmic-facing.

The protein belongs to the major facilitator superfamily. Sugar transporter (TC 2.A.1.1) family.

The protein resides in the cell membrane. With respect to regulation, xylose uptake is strongly inhibited by glucose. Its function is as follows. Low-affinity glucose transporter. Can also transport xylose. This Saccharomyces cerevisiae (strain JAY291) (Baker's yeast) protein is Low-affinity glucose transporter HXT4 (HXT4).